Consider the following 506-residue polypeptide: AAA-ATPase At4g25835 (506 aa).

Positions 1 to 20 (MKEYWTSLASLLGVLAFCQS) are cleaved as a signal peptide. 244 to 251 (GPPGTGKS) serves as a coordination point for ATP. Residues 462-506 (GKSRVQNVSLEEQENRAFDSLYAEENGGEEEEIEDNICKSSDDCS) are disordered. Acidic residues predominate over residues 487-496 (NGGEEEEIED). Over residues 497 to 506 (NICKSSDDCS) the composition is skewed to basic and acidic residues.

This sequence belongs to the AAA ATPase family. BCS1 subfamily. It depends on Mg(2+) as a cofactor.

The catalysed reaction is ATP + H2O = ADP + phosphate + H(+). The polypeptide is AAA-ATPase At4g25835 (Arabidopsis thaliana (Mouse-ear cress)).